Consider the following 95-residue polypeptide: Co-chaperonin GroES (95 aa).

Belongs to the GroES chaperonin family. In terms of assembly, heptamer of 7 subunits arranged in a ring. Interacts with the chaperonin GroEL.

The protein resides in the cytoplasm. Together with the chaperonin GroEL, plays an essential role in assisting protein folding. The GroEL-GroES system forms a nano-cage that allows encapsulation of the non-native substrate proteins and provides a physical environment optimized to promote and accelerate protein folding. GroES binds to the apical surface of the GroEL ring, thereby capping the opening of the GroEL channel. The polypeptide is Co-chaperonin GroES (Zymomonas mobilis subsp. mobilis (strain ATCC 31821 / ZM4 / CP4)).